Reading from the N-terminus, the 143-residue chain is Peptide methionine sulfoxide reductase MsrB (143 aa).

In terms of domain architecture, MsrB spans 16 to 139 (DAELRRRLTP…NSAALNFEAK (124 aa)). Cysteine 55, cysteine 58, cysteine 104, and cysteine 107 together coordinate Zn(2+). Cysteine 128 acts as the Nucleophile in catalysis.

This sequence belongs to the MsrB Met sulfoxide reductase family. Requires Zn(2+) as cofactor.

It carries out the reaction L-methionyl-[protein] + [thioredoxin]-disulfide + H2O = L-methionyl-(R)-S-oxide-[protein] + [thioredoxin]-dithiol. The polypeptide is Peptide methionine sulfoxide reductase MsrB (Burkholderia mallei (strain NCTC 10229)).